The primary structure comprises 120 residues: Large ribosomal subunit protein uL22 (120 aa).

Residues 1–25 (MFVNKKYTAKGKNLPSSPKKVRPIA) are disordered.

It belongs to the universal ribosomal protein uL22 family. As to quaternary structure, part of the 50S ribosomal subunit.

In terms of biological role, this protein binds specifically to 23S rRNA; its binding is stimulated by other ribosomal proteins, e.g. L4, L17, and L20. It is important during the early stages of 50S assembly. It makes multiple contacts with different domains of the 23S rRNA in the assembled 50S subunit and ribosome. Its function is as follows. The globular domain of the protein is located near the polypeptide exit tunnel on the outside of the subunit, while an extended beta-hairpin is found that lines the wall of the exit tunnel in the center of the 70S ribosome. The protein is Large ribosomal subunit protein uL22 of Borrelia recurrentis (strain A1).